The chain runs to 98 residues: uncharacterized protein (98 aa).

Positions 1-85 constitute an STAS domain; the sequence is MLETVPVRCV…GTLKQALENM (85 aa).

Post-translationally, phosphorylated on threonine residue(s). Phosphorylated by PrkC and dephosphorylated by PrpC.

It is found in the cytoplasm. This is an uncharacterized protein from Bacillus subtilis (strain 168).